Here is a 78-residue protein sequence, read N- to C-terminus: Protein SlyX homolog (78 aa).

The protein belongs to the SlyX family.

In Xanthomonas axonopodis pv. citri (strain 306), this protein is Protein SlyX homolog.